We begin with the raw amino-acid sequence, 249 residues long: Coproheme decarboxylase (249 aa).

Y145 is a catalytic residue. Fe-coproporphyrin III is bound by residues 145 to 149 (YPMAR) and H172.

It belongs to the ChdC family. Type 1 subfamily. Fe-coproporphyrin III serves as cofactor.

The enzyme catalyses Fe-coproporphyrin III + 2 H2O2 + 2 H(+) = heme b + 2 CO2 + 4 H2O. The catalysed reaction is Fe-coproporphyrin III + H2O2 + H(+) = harderoheme III + CO2 + 2 H2O. It carries out the reaction harderoheme III + H2O2 + H(+) = heme b + CO2 + 2 H2O. Its pathway is porphyrin-containing compound metabolism; protoheme biosynthesis. Involved in coproporphyrin-dependent heme b biosynthesis. Catalyzes the decarboxylation of Fe-coproporphyrin III (coproheme) to heme b (protoheme IX), the last step of the pathway. The reaction occurs in a stepwise manner with a three-propionate intermediate. The protein is Coproheme decarboxylase of Oceanobacillus iheyensis (strain DSM 14371 / CIP 107618 / JCM 11309 / KCTC 3954 / HTE831).